Here is an 86-residue protein sequence, read N- to C-terminus: MAHKKAMGSTENTRDSNPSYLGVKSYGGEHVHAGSIIVRQRGTKFHPGHNVGRGSDDTLFAKDHGVVKFARSGGDRKYVHVVPEEA.

Residues 1 to 24 are disordered; sequence MAHKKAMGSTENTRDSNPSYLGVK. Residues 9 to 19 are compositionally biased toward polar residues; sequence STENTRDSNPS.

Belongs to the bacterial ribosomal protein bL27 family.

This Salinibacter ruber (strain DSM 13855 / M31) protein is Large ribosomal subunit protein bL27.